Here is a 308-residue protein sequence, read N- to C-terminus: Ornithine carbamoyltransferase (308 aa).

Carbamoyl phosphate-binding positions include 56–59 (STRT), glutamine 83, arginine 107, and 134–137 (HPCQ). Residues asparagine 165, aspartate 225, and 229-230 (SM) each bind L-ornithine. Carbamoyl phosphate is bound by residues 266 to 267 (CL) and arginine 294.

Belongs to the aspartate/ornithine carbamoyltransferase superfamily. OTCase family.

The protein localises to the cytoplasm. The enzyme catalyses carbamoyl phosphate + L-ornithine = L-citrulline + phosphate + H(+). It functions in the pathway amino-acid biosynthesis; L-arginine biosynthesis; L-arginine from L-ornithine and carbamoyl phosphate: step 1/3. Reversibly catalyzes the transfer of the carbamoyl group from carbamoyl phosphate (CP) to the N(epsilon) atom of ornithine (ORN) to produce L-citrulline. The polypeptide is Ornithine carbamoyltransferase (Cereibacter sphaeroides (strain ATCC 17023 / DSM 158 / JCM 6121 / CCUG 31486 / LMG 2827 / NBRC 12203 / NCIMB 8253 / ATH 2.4.1.) (Rhodobacter sphaeroides)).